The sequence spans 501 residues: Sarpagan bridge enzyme (501 aa).

The chain crosses the membrane as a helical; Signal-anchor for type II membrane protein span at residues 3 to 23 (VMQLSFSYPALFLFVFFLFML). Position 441 (Cys-441) interacts with heme.

Belongs to the cytochrome P450 family. It depends on heme as a cofactor. In terms of tissue distribution, highly expressed in roots. Expressed at low levels in stems.

It localises to the endoplasmic reticulum membrane. The catalysed reaction is (19E)-geissoschizine + reduced [NADPH--hemoprotein reductase] + O2 = polyneuridine aldehyde + oxidized [NADPH--hemoprotein reductase] + 2 H2O + H(+). It carries out the reaction tetrahydroalstonine + A + reduced [NADPH--hemoprotein reductase] + O2 = alstonine + AH2 + oxidized [NADPH--hemoprotein reductase] + 2 H2O + H(+). The enzyme catalyses ajmalicine + A + reduced [NADPH--hemoprotein reductase] + O2 = serpentine + AH2 + oxidized [NADPH--hemoprotein reductase] + 2 H2O + H(+). The protein operates within alkaloid biosynthesis; ajmaline biosynthesis. In terms of biological role, monooxygenase involved in the biosynthesis of ajmaline-type monoterpenoid indole alkaloids (MIAs) natural products, important plant-derived pharmaceuticals used in the therapy of heart disorders. Converts by cyclization the strictosidine-derived geissoschizine to the sarpagan alkaloid polyneuridine aldehyde, precursor of vomilenine, an intermediate chemical in the biosynthesis of ajmaline. Converts by aromatization the tetrahydro-beta-carboline alkaloids tetrahydroalstonine and ajmalicine to the corresponding beta-carboline alkaloids alstonine and serpentine, respectively. The chain is Sarpagan bridge enzyme from Gelsemium sempervirens (Carolina jasmine).